The sequence spans 406 residues: MDPTLTELLHSNLQWIFVGGKGGVGKTTTSCALATLFATTPISDAAAPDGTRPRRVLLISTDPAHNLSDAFNQRFGPQPTPVKGLEDTLAAMEVDPKNFTHGALMSSLTGANSGGSASSLSREAEADAVEQTASFARIGAVLKEAARTMPGIDEISVFAEILHYVRTLSYDLLIFDTAPTGHTLRLLALPQTLNSTFDRLMSLEGLAPMLEAASHLIGSSLGAVGGDSVSGCEVATAMPSSSSTAPGAGSAATGSSQGSWSITADEVRAKALHWRQVMEEVQDRFNDPSRTSFVCVCIAEFLSVYETERLVQELMKYNIGCDSIVVNQLVLKPSSEPPCRMCAARQKIQTKYLEQIDLLYDDFHVVKMPLLSDEVRGIPALKMFARFLQEPYNPDTHGYIDVQESC.

Residue 21–28 (KGGVGKTT) participates in ATP binding. The active site involves Asp-62. ATP-binding residues include Glu-300 and Asn-327. Positions 339 and 342 each coordinate Zn(2+).

Belongs to the arsA ATPase family. As to quaternary structure, homodimer.

Its subcellular location is the cytoplasm. It localises to the endoplasmic reticulum. Functionally, ATPase required for the post-translational delivery of tail-anchored (TA) proteins to the endoplasmic reticulum. Recognizes and selectively binds the transmembrane domain of TA proteins in the cytosol. This complex then targets to the endoplasmic reticulum by membrane-bound receptors, where the tail-anchored protein is released for insertion. This process is regulated by ATP binding and hydrolysis. ATP binding drives the homodimer towards the closed dimer state, facilitating recognition of newly synthesized TA membrane proteins. ATP hydrolysis is required for insertion. Subsequently, the homodimer reverts towards the open dimer state, lowering its affinity for the membrane-bound receptor, and returning it to the cytosol to initiate a new round of targeting. This chain is ATPase ASNA1 homolog, found in Leishmania braziliensis.